Reading from the N-terminus, the 222-residue chain is Triosephosphate isomerase (222 aa).

Substrate is bound at residue 9–11; the sequence is NYK. The Electrophile role is filled by His-93. The Proton acceptor role is filled by Glu-141. Substrate-binding positions include Ile-146, Gly-181, and 202–203; that span reads AS.

The protein belongs to the triosephosphate isomerase family. As to quaternary structure, homotetramer; dimer of dimers.

It localises to the cytoplasm. It catalyses the reaction D-glyceraldehyde 3-phosphate = dihydroxyacetone phosphate. The protein operates within carbohydrate biosynthesis; gluconeogenesis. Its pathway is carbohydrate degradation; glycolysis; D-glyceraldehyde 3-phosphate from glycerone phosphate: step 1/1. In terms of biological role, involved in the gluconeogenesis. Catalyzes stereospecifically the conversion of dihydroxyacetone phosphate (DHAP) to D-glyceraldehyde-3-phosphate (G3P). This is Triosephosphate isomerase from Methanobrevibacter smithii (strain ATCC 35061 / DSM 861 / OCM 144 / PS).